A 316-amino-acid polypeptide reads, in one-letter code: MQASELTPKWYVAPVSIKDEAVVKNLKAKIQALGFNHEIVDVKVLKEREVHEEVYSLKSGKLPRSLKNTTFNKWFVLDDYRYLRVKISEKNLLGRYIYIKMIYSEDAWRIVRNFPGITGIVGSSGRGALPIPLDEKDANNLEQMLKGISINPSKRIMLTNTAIIEMDSDKFDEKFQYILKQKQAIQKPKEDEDSEIVDAEKLKEAFKKLQNSQEQDEWKEKATIIQSEQTKLDPSVLVPFLGKYEILDTDNKVEQLFEFSVGNLVEVHLTDTIHVQGQIKALYQGTVNKAVVEIELTSKTQLINLPLENLSFVEFE.

It belongs to the NusG family.

In terms of biological role, participates in transcription elongation, termination and antitermination. The protein is Transcription termination/antitermination protein NusG of Mycoplasma genitalium (strain ATCC 33530 / DSM 19775 / NCTC 10195 / G37) (Mycoplasmoides genitalium).